The primary structure comprises 154 residues: SsrA-binding protein (154 aa).

Residues 132–154 (KRESIKKRQDKRDMERALKRGAE) form a disordered region.

The protein belongs to the SmpB family.

It is found in the cytoplasm. Required for rescue of stalled ribosomes mediated by trans-translation. Binds to transfer-messenger RNA (tmRNA), required for stable association of tmRNA with ribosomes. tmRNA and SmpB together mimic tRNA shape, replacing the anticodon stem-loop with SmpB. tmRNA is encoded by the ssrA gene; the 2 termini fold to resemble tRNA(Ala) and it encodes a 'tag peptide', a short internal open reading frame. During trans-translation Ala-aminoacylated tmRNA acts like a tRNA, entering the A-site of stalled ribosomes, displacing the stalled mRNA. The ribosome then switches to translate the ORF on the tmRNA; the nascent peptide is terminated with the 'tag peptide' encoded by the tmRNA and targeted for degradation. The ribosome is freed to recommence translation, which seems to be the essential function of trans-translation. The polypeptide is SsrA-binding protein (Acaryochloris marina (strain MBIC 11017)).